The chain runs to 50 residues: Large ribosomal subunit protein bL33B (50 aa).

This sequence belongs to the bacterial ribosomal protein bL33 family.

In Streptococcus pneumoniae (strain ATCC BAA-255 / R6), this protein is Large ribosomal subunit protein bL33B.